Consider the following 254-residue polypeptide: Imidazole glycerol phosphate synthase subunit HisF (254 aa).

Active-site residues include D12 and D131.

This sequence belongs to the HisA/HisF family. Heterodimer of HisH and HisF.

Its subcellular location is the cytoplasm. It carries out the reaction 5-[(5-phospho-1-deoxy-D-ribulos-1-ylimino)methylamino]-1-(5-phospho-beta-D-ribosyl)imidazole-4-carboxamide + L-glutamine = D-erythro-1-(imidazol-4-yl)glycerol 3-phosphate + 5-amino-1-(5-phospho-beta-D-ribosyl)imidazole-4-carboxamide + L-glutamate + H(+). The protein operates within amino-acid biosynthesis; L-histidine biosynthesis; L-histidine from 5-phospho-alpha-D-ribose 1-diphosphate: step 5/9. Functionally, IGPS catalyzes the conversion of PRFAR and glutamine to IGP, AICAR and glutamate. The HisF subunit catalyzes the cyclization activity that produces IGP and AICAR from PRFAR using the ammonia provided by the HisH subunit. The sequence is that of Imidazole glycerol phosphate synthase subunit HisF from Leuconostoc mesenteroides subsp. mesenteroides (strain ATCC 8293 / DSM 20343 / BCRC 11652 / CCM 1803 / JCM 6124 / NCDO 523 / NBRC 100496 / NCIMB 8023 / NCTC 12954 / NRRL B-1118 / 37Y).